The chain runs to 341 residues: Anthranilate phosphoribosyltransferase (341 aa).

5-phospho-alpha-D-ribose 1-diphosphate-binding positions include glycine 81, glycine 84 to aspartate 85, asparagine 91 to threonine 94, lysine 109 to serine 117, and serine 121. Glycine 81 is a binding site for anthranilate. Serine 93 is a binding site for Mg(2+). An anthranilate-binding site is contributed by asparagine 112. Residue arginine 167 coordinates anthranilate. The Mg(2+) site is built by aspartate 226 and glutamate 227.

This sequence belongs to the anthranilate phosphoribosyltransferase family. In terms of assembly, homodimer. The cofactor is Mg(2+).

The catalysed reaction is N-(5-phospho-beta-D-ribosyl)anthranilate + diphosphate = 5-phospho-alpha-D-ribose 1-diphosphate + anthranilate. It participates in amino-acid biosynthesis; L-tryptophan biosynthesis; L-tryptophan from chorismate: step 2/5. Its function is as follows. Catalyzes the transfer of the phosphoribosyl group of 5-phosphorylribose-1-pyrophosphate (PRPP) to anthranilate to yield N-(5'-phosphoribosyl)-anthranilate (PRA). The chain is Anthranilate phosphoribosyltransferase from Teredinibacter turnerae (strain ATCC 39867 / T7901).